Here is a 782-residue protein sequence, read N- to C-terminus: DNA repair and recombination protein RAD54-like (782 aa).

Positions M1–D20 are enriched in polar residues. The interval M1–K28 is disordered. The tract at residues R2–Q9 is required for chromatin remodeling, strand pairing activities and coupling of ATPase activity. Residue T22 is modified to Phosphothreonine. In terms of domain architecture, Helicase ATP-binding spans E168 to E343. Residue D181–T188 coordinates ATP. The DEGH box signature appears at D294–H297. The Helicase C-terminal domain maps to L501–T658. Residues S741 to S753 show a composition bias toward polar residues. Residues S741–F782 form a disordered region. A compositionally biased stretch (acidic residues) spans D773–F782.

This sequence belongs to the SNF2/RAD54 helicase family. As to quaternary structure, interacts (via N-terminus) with spn-A/Rad51.

The protein resides in the nucleus. Its function is as follows. Involved in mitotic DNA repair and meiotic recombination. Functions in the recombinational DNA repair pathway. Essential for interhomolog gene conversion (GC), but may have a less important role in intersister GC than spn-A/Rad51. In the presence of DNA, spn-A/Rad51 enhances the ATPase activity of okr/Rad54. The sequence is that of DNA repair and recombination protein RAD54-like from Drosophila pseudoobscura pseudoobscura (Fruit fly).